Reading from the N-terminus, the 532-residue chain is Flavin-containing monooxygenase 1 (532 aa).

Ala-2 carries the N-acetylalanine modification. The Lumenal portion of the chain corresponds to Ala-2–Pro-510. Residues Gly-9–Ser-13, Glu-32, Leu-40–Trp-41, and Asn-61–Ser-62 contribute to the FAD site. NADP(+)-binding positions include Ser-60 to Asn-61 and Ser-195 to Asp-198. The chain crosses the membrane as a helical span at residues Phe-511–Phe-531. Residue Leu-532 is a topological domain, cytoplasmic.

This sequence belongs to the FMO family. It depends on FAD as a cofactor. In terms of tissue distribution, expressed mainly in fetal and adult liver.

The protein resides in the endoplasmic reticulum membrane. The catalysed reaction is hypotaurine + NADPH + O2 + H(+) = taurine + NADP(+) + H2O. It carries out the reaction hypotaurine + NADH + O2 + H(+) = taurine + NAD(+) + H2O. It catalyses the reaction trimethylamine + NADPH + O2 = trimethylamine N-oxide + NADP(+) + H2O. The enzyme catalyses N,N-dimethylaniline + NADPH + O2 + H(+) = N,N-dimethylaniline N-oxide + NADP(+) + H2O. Functionally, broad spectrum monooxygenase that catalyzes the oxygenation of a wide variety of nitrogen- and sulfur-containing compounds including xenobiotics. Catalyzes the S-oxygenation of hypotaurine to produce taurine, an organic osmolyte involved in cell volume regulation as well as a variety of cytoprotective and developmental processes. In vitro, catalyzes the N-oxygenation of trimethylamine (TMA) to produce trimethylamine N-oxide (TMAO) and could therefore participate to the detoxification of this compound that is generated by the action of gut microbiota from dietary precursors such as choline, choline containing compounds, betaine or L-carnitine. This Homo sapiens (Human) protein is Flavin-containing monooxygenase 1.